The primary structure comprises 512 residues: Putative UDP-glucuronosyltransferase ugt-55 (512 aa).

Residues 1–22 form the signal peptide; it reads MQLLTLPTLIFIFLNYGTPCLS. A helical transmembrane segment spans residues 487–507; sequence ILLYLDSIAMFTLTLLTMILI.

It belongs to the UDP-glycosyltransferase family.

The protein resides in the membrane. It carries out the reaction glucuronate acceptor + UDP-alpha-D-glucuronate = acceptor beta-D-glucuronoside + UDP + H(+). The polypeptide is Putative UDP-glucuronosyltransferase ugt-55 (ugt-55) (Caenorhabditis elegans).